We begin with the raw amino-acid sequence, 124 residues long: Fluoride-specific ion channel FluC 1 (124 aa).

Transmembrane regions (helical) follow at residues 7-27, 35-55, 63-83, and 101-121; these read ALTLAAAGAGSVLRYLLGGWV, FPWGTLAVNALGCLGLGLLQG, LLLVLGSGLLAGFTTFSTLML, and IVGTLALGLFALSAGARAGAW.

It belongs to the fluoride channel Fluc/FEX (TC 1.A.43) family.

It is found in the cell membrane. The enzyme catalyses fluoride(in) = fluoride(out). Fluoride-specific ion channel. Important for reducing fluoride concentration in the cell, thus reducing its toxicity. This chain is Fluoride-specific ion channel FluC 1, found in Rubrobacter xylanophilus (strain DSM 9941 / JCM 11954 / NBRC 16129 / PRD-1).